The chain runs to 432 residues: MSKETKGNNNTSRVMSGYGGSLEANTLAMIDSTGAKDSRDANEDRLQYLEAVRAASLVPENGIPPTNKMYQAIFRILRFGKTLELITASFQLLTQLHQRFPWVYVSDSADQLDIVDEAWSPFNFGSDVDSDEKDLSVRSLFLQQLIQNMNKRVNESEESDLKILGNMFLFKYLAHVLKLDFTPRNQVYEETMNWSLLKESFLNLLLASRKVNFKLLMKDYLSTMCASIDADEKSISLVELHKDMLTAMKELLVMIMELDTSKKKADLEGITSRGDGVRTPAMEIILDELTYDGYLLSKFLQVFDDPKWKLEIVLQYLTKYIPKPVVRTRRTTVPQAEDSKTLNGILKTFSNGTNPKNITKKIGPDIVQILIGHAFLARLTFSDPHEGDSISEICSSIISAFTSLKRVDQKIEILPFGKEVLFTAGMVLKAKA.

As to quaternary structure, interacts with SSN2. Binds to NTL9/CBNAC to promote its binding to promoters of target genes. Component of the SMC5-SMC6 complex which consists at least of SMC5 and SMC6B. Interacts with RAD17. Expressed at low levels in the veins.

It is found in the nucleus. Functionally, component of the SMC5-SMC6 complex, a complex involved in repair of DNA double-strand breaks by homologous recombination. Transcription repressor that prevents expression of pathogenesis-related genes (PR) via histone modifications and binding negative cis-acting elements at their promoters. Negative regulator of hypersensitive response (HR) and systemic acquired resistance (SAR) required to dampen the basal expression of pathogenesis related (PR) genes. Functions synergistically with NTL9/CBNAC as negative regulator of pathogen-induced PR1 expression and basal resistance to a virulent strain of P.syringae. Binds to the PR1 gene promoter to suppress defense response in the absence of pathogen challenge and is removed in response to induction. Negatively regulates both gene expression and DNA recombination during pathogen infection, thus being involved in short-term defense response and a long-term survival strategy. Prevents effective immune responses that involve activation of DNA damage responses, probably by negatively regulating the DNA damage sensors RAD17 and ATR. Negative regulator of defenses against the beet cyst nematode H.schachtii. In Arabidopsis thaliana (Mouse-ear cress), this protein is Negative regulator of systemic acquired resistance SNI1.